Here is a 597-residue protein sequence, read N- to C-terminus: Protein disulfide isomerase-like 1-4 (597 aa).

Positions 1-25 (MAFRVLLLFSLTALLIFSAVSPSFA) are cleaved as a signal peptide. Acidic residues-rich tracts occupy residues 37–49 (LSFLEDLKEDDVP) and 61–84 (DEFEGGEEEDPDMYNDDDDEEGDF). Positions 37 to 101 (LSFLEDLKED…SDPLPTPEID (65 aa)) are disordered. The Thioredoxin 1 domain maps to 85 to 208 (SDLGNPDSDP…IVTWVKKKIG (124 aa)). N-linked (GlcNAc...) asparagine glycosylation occurs at asparagine 112. Active-site nucleophile residues include cysteine 132 and cysteine 135. Cysteine 132 and cysteine 135 are oxidised to a cystine. N-linked (GlcNAc...) asparagine glycosylation is found at asparagine 213 and asparagine 342. The Thioredoxin 2 domain occupies 429–550 (FYKSDPIPEK…FYKFLRKHAT (122 aa)). Residues cysteine 471 and cysteine 474 each act as nucleophile in the active site. Residues cysteine 471 and cysteine 474 are joined by a disulfide bond. An N-linked (GlcNAc...) asparagine glycan is attached at asparagine 524. Residues 555–597 (LEKPASTESPKTAESTPKVETTETKESPDSTTKSSQSDSKDEL) form a disordered region. Residues 560-573 (STESPKTAESTPKV) are compositionally biased toward polar residues. The Prevents secretion from ER signature appears at 594 to 597 (KDEL).

This sequence belongs to the protein disulfide isomerase family. In terms of assembly, interacts with MEE8 and MED37A. In terms of tissue distribution, expressed in germinating seedling, including the cotyledons and hypocotyl, in vascular tissues, in pollen grains, root tips, leaf trichomes, developing seeds and siliques.

It localises to the endoplasmic reticulum lumen. The protein resides in the golgi apparatus. The protein localises to the vacuole. Its subcellular location is the nucleus. It is found in the secreted. It localises to the cell wall. The catalysed reaction is Catalyzes the rearrangement of -S-S- bonds in proteins.. Functionally, acts as a protein-folding catalyst that interacts with nascent polypeptides to catalyze the formation, isomerization, and reduction or oxidation of disulfide bonds. This is Protein disulfide isomerase-like 1-4 (PDIL1-4) from Arabidopsis thaliana (Mouse-ear cress).